The primary structure comprises 199 residues: Superoxide dismutase [Mn/Fe] (199 aa).

His-27, His-81, Asp-161, and His-165 together coordinate Fe(3+). Mn(2+) is bound by residues His-27, His-81, Asp-161, and His-165.

Belongs to the iron/manganese superoxide dismutase family. As to quaternary structure, homodimer. Mn(2+) serves as cofactor. Fe(3+) is required as a cofactor.

The enzyme catalyses 2 superoxide + 2 H(+) = H2O2 + O2. In terms of biological role, destroys superoxide anion radicals which are normally produced within the cells and which are toxic to biological systems. Catalyzes the dismutation of superoxide anion radicals into O2 and H2O2 by successive reduction and oxidation of the transition metal ion at the active site. This Staphylococcus epidermidis protein is Superoxide dismutase [Mn/Fe] (sodA).